We begin with the raw amino-acid sequence, 276 residues long: Large ribosomal subunit protein uL2 (276 aa).

The disordered stretch occupies residues 219–276 (TVRGSVMNPNDHPHGGGEGKQPIGRKQQMTPWGKKARGIKTRDKKKASTSMIVRRRNG). Residues 252–276 (KKARGIKTRDKKKASTSMIVRRRNG) are compositionally biased toward basic residues.

The protein belongs to the universal ribosomal protein uL2 family. As to quaternary structure, part of the 50S ribosomal subunit. Forms a bridge to the 30S subunit in the 70S ribosome.

In terms of biological role, one of the primary rRNA binding proteins. Required for association of the 30S and 50S subunits to form the 70S ribosome, for tRNA binding and peptide bond formation. It has been suggested to have peptidyltransferase activity; this is somewhat controversial. Makes several contacts with the 16S rRNA in the 70S ribosome. This Acholeplasma laidlawii (strain PG-8A) protein is Large ribosomal subunit protein uL2.